The chain runs to 505 residues: ATP synthase subunit alpha (505 aa).

Residue 169–176 coordinates ATP; the sequence is GDRQIGKT.

This sequence belongs to the ATPase alpha/beta chains family. F-type ATPases have 2 components, CF(1) - the catalytic core - and CF(0) - the membrane proton channel. CF(1) has five subunits: alpha(3), beta(3), gamma(1), delta(1), epsilon(1). CF(0) has three main subunits: a(1), b(2) and c(9-12). The alpha and beta chains form an alternating ring which encloses part of the gamma chain. CF(1) is attached to CF(0) by a central stalk formed by the gamma and epsilon chains, while a peripheral stalk is formed by the delta and b chains.

It localises to the cell inner membrane. It carries out the reaction ATP + H2O + 4 H(+)(in) = ADP + phosphate + 5 H(+)(out). Its function is as follows. Produces ATP from ADP in the presence of a proton gradient across the membrane. The alpha chain is a regulatory subunit. This is ATP synthase subunit alpha from Desulfatibacillum aliphaticivorans.